Reading from the N-terminus, the 225-residue chain is Ribose-5-phosphate isomerase A (225 aa).

Substrate contacts are provided by residues 32-35 (TGST), 85-88 (DGAD), and 98-101 (KGGG). Catalysis depends on glutamate 107, which acts as the Proton acceptor. Residue lysine 125 coordinates substrate.

It belongs to the ribose 5-phosphate isomerase family. Homodimer.

The enzyme catalyses aldehydo-D-ribose 5-phosphate = D-ribulose 5-phosphate. It participates in carbohydrate degradation; pentose phosphate pathway; D-ribose 5-phosphate from D-ribulose 5-phosphate (non-oxidative stage): step 1/1. Its function is as follows. Catalyzes the reversible conversion of ribose-5-phosphate to ribulose 5-phosphate. The polypeptide is Ribose-5-phosphate isomerase A (Hahella chejuensis (strain KCTC 2396)).